We begin with the raw amino-acid sequence, 1201 residues long: DNA-directed RNA polymerase subunit beta (1201 aa).

The disordered stretch occupies residues 1165–1201 (DALSKFKQQQDEKAADKAAKADAAKPSETTNAQQDNQ). A compositionally biased stretch (basic and acidic residues) spans 1172-1189 (QQQDEKAADKAAKADAAK). The span at 1191-1201 (SETTNAQQDNQ) shows a compositional bias: polar residues.

Belongs to the RNA polymerase beta chain family. In terms of assembly, the RNAP catalytic core consists of 2 alpha, 1 beta, 1 beta' and 1 omega subunit. When a sigma factor is associated with the core the holoenzyme is formed, which can initiate transcription.

It catalyses the reaction RNA(n) + a ribonucleoside 5'-triphosphate = RNA(n+1) + diphosphate. Functionally, DNA-dependent RNA polymerase catalyzes the transcription of DNA into RNA using the four ribonucleoside triphosphates as substrates. In Lactiplantibacillus plantarum (strain ATCC BAA-793 / NCIMB 8826 / WCFS1) (Lactobacillus plantarum), this protein is DNA-directed RNA polymerase subunit beta.